A 962-amino-acid polypeptide reads, in one-letter code: IQ motif and SEC7 domain-containing protein 1 (962 aa).

The disordered stretch occupies residues Met-1 to Glu-96. The span at Leu-8–Thr-19 shows a compositional bias: low complexity. A compositionally biased stretch (polar residues) spans Ser-30 to Ser-39. Ser-89, Ser-105, and Ser-107 each carry phosphoserine. The IQ domain occupies Thr-134 to Glu-163. Phosphoserine occurs at positions 180, 248, and 252. 3 disordered regions span residues Ser-264 to Leu-292, Leu-311 to Leu-333, and Lys-348 to Ala-516. Basic and acidic residues predominate over residues Ala-273–Leu-292. 2 stretches are compositionally biased toward basic and acidic residues: residues Glu-365–His-375 and Leu-429–Glu-445. Residues Asp-470 to Ser-488 are compositionally biased toward low complexity. Phosphoserine occurs at positions 511 and 514. The SEC7 domain occupies Ala-516–Arg-709. A PH domain is found at His-773–Glu-865. A Phosphoserine modification is found at Ser-891. The residue at position 910 (Tyr-910) is a Phosphotyrosine. Residues Leu-921 to Ser-962 form a disordered region. A phosphoserine mark is found at Ser-923 and Ser-924. The segment covering Ser-939–Glu-948 has biased composition (polar residues).

Belongs to the BRAG family. Interacts with ARF1 and ARF6. Interacts with GRIA2; the interaction is required for ARF6 activation.

It is found in the cytoplasm. The protein resides in the nucleus. It localises to the postsynaptic density. Its subcellular location is the cytoplasmic vesicle. The protein localises to the secretory vesicle. It is found in the synaptic vesicle. Its function is as follows. Guanine nucleotide exchange factor for ARF1 and ARF6. Guanine nucleotide exchange factor activity is enhanced by lipid binding. Accelerates GTP binding by ARFs of all three classes. Guanine nucleotide exchange protein for ARF6, mediating internalization of beta-1 integrin. Involved in neuronal development. In neurons, plays a role in the control of vesicle formation by endocytoc cargo. Upon long term depression, interacts with GRIA2 and mediates the activation of ARF6 to internalize synaptic AMPAR receptors. This is IQ motif and SEC7 domain-containing protein 1 from Rattus norvegicus (Rat).